The primary structure comprises 481 residues: uncharacterized protein (481 aa).

11 consecutive transmembrane segments (helical) span residues 14–34 (LGFC…GIFL), 46–66 (FAPM…IVFA), 90–110 (IGIY…GVLA), 134–154 (FSVK…INLF), 167–187 (TVGK…IITT), 218–238 (FSSM…FESI), 258–278 (IAIF…MLLG), 303–323 (IIVV…SFGA), 377–397 (LAVI…IALA), 411–431 (AFTD…LAVS), and 446–466 (YFSI…AYLH).

It belongs to the amino acid-polyamine-organocation (APC) superfamily.

The protein resides in the cell membrane. Functionally, probable amino-acid or metabolite transport protein. This is an uncharacterized protein from Mycobacterium bovis (strain ATCC BAA-935 / AF2122/97).